The sequence spans 437 residues: Enolase (437 aa).

Gln-163 provides a ligand contact to (2R)-2-phosphoglycerate. The active-site Proton donor is the Glu-205. Residues Asp-242, Glu-285, and Asp-312 each contribute to the Mg(2+) site. (2R)-2-phosphoglycerate-binding residues include Lys-337, Arg-366, Ser-367, and Lys-388. Catalysis depends on Lys-337, which acts as the Proton acceptor.

It belongs to the enolase family. It depends on Mg(2+) as a cofactor.

It localises to the cytoplasm. The protein resides in the secreted. The protein localises to the cell surface. It carries out the reaction (2R)-2-phosphoglycerate = phosphoenolpyruvate + H2O. The protein operates within carbohydrate degradation; glycolysis; pyruvate from D-glyceraldehyde 3-phosphate: step 4/5. Catalyzes the reversible conversion of 2-phosphoglycerate (2-PG) into phosphoenolpyruvate (PEP). It is essential for the degradation of carbohydrates via glycolysis. The chain is Enolase from Nitratidesulfovibrio vulgaris (strain DP4) (Desulfovibrio vulgaris).